Here is a 284-residue protein sequence, read N- to C-terminus: MKLDGYTRLAAVVANPIKHSISPFIHNRAFEATATNGAYVAWEIEASDLVETVANIRRYQMFGINLSMPYKEQVIPYLDKLSDEARLIGAVNTVVNENGNLIGYNTDGKGFFKCLPSFTISGKKMILLGAGGAAKSILAQAILDGVSQISVFVRSVSMEKTRPYLDKLQEQTGFKVDLCALEYVSELQARIAESDLLVNATSVGMDGQFSPVPENIVLPETLLVADIIYQPFETPFLKWARSQGNPAVNGLGMLLYQAAEAFQLWTGKEMPTEEIWQSLTEKYQ.

Shikimate contacts are provided by residues 20–22 (SIS) and serine 67. Lysine 71 acts as the Proton acceptor in catalysis. Position 83 (aspartate 83) interacts with NADP(+). Shikimate is bound by residues asparagine 92 and aspartate 107. NADP(+)-binding positions include 129 to 133 (GAGGA) and isoleucine 227. Tyrosine 229 contacts shikimate. Glycine 250 contacts NADP(+).

The protein belongs to the shikimate dehydrogenase family. In terms of assembly, homodimer.

The catalysed reaction is shikimate + NADP(+) = 3-dehydroshikimate + NADPH + H(+). The protein operates within metabolic intermediate biosynthesis; chorismate biosynthesis; chorismate from D-erythrose 4-phosphate and phosphoenolpyruvate: step 4/7. Its function is as follows. Involved in the biosynthesis of the chorismate, which leads to the biosynthesis of aromatic amino acids. Catalyzes the reversible NADPH linked reduction of 3-dehydroshikimate (DHSA) to yield shikimate (SA). This chain is Shikimate dehydrogenase (NADP(+)), found in Streptococcus pneumoniae (strain 70585).